A 400-amino-acid chain; its full sequence is Enolase (400 aa).

Glutamine 154 lines the (2R)-2-phosphoglycerate pocket. Catalysis depends on glutamate 197, which acts as the Proton donor. Mg(2+) is bound by residues aspartate 233, glutamate 274, and aspartate 301. (2R)-2-phosphoglycerate is bound by residues lysine 326, arginine 355, serine 356, and lysine 377. The active-site Proton acceptor is lysine 326.

The protein belongs to the enolase family. Mg(2+) is required as a cofactor.

The protein resides in the cytoplasm. The protein localises to the secreted. It localises to the cell surface. It carries out the reaction (2R)-2-phosphoglycerate = phosphoenolpyruvate + H2O. It functions in the pathway carbohydrate degradation; glycolysis; pyruvate from D-glyceraldehyde 3-phosphate: step 4/5. Its function is as follows. Catalyzes the reversible conversion of 2-phosphoglycerate (2-PG) into phosphoenolpyruvate (PEP). It is essential for the degradation of carbohydrates via glycolysis. The protein is Enolase of Picrophilus torridus (strain ATCC 700027 / DSM 9790 / JCM 10055 / NBRC 100828 / KAW 2/3).